The chain runs to 157 residues: 2-C-methyl-D-erythritol 2,4-cyclodiphosphate synthase (157 aa).

Residues D8 and H10 each contribute to the a divalent metal cation site. Residues D8 to H10 and H34 to S35 contribute to the 4-CDP-2-C-methyl-D-erythritol 2-phosphate site. H42 serves as a coordination point for a divalent metal cation. Residues D56–G58, F61–D65, A100–A106, T132–E135, F139, and R142 each bind 4-CDP-2-C-methyl-D-erythritol 2-phosphate.

The protein belongs to the IspF family. In terms of assembly, homotrimer. A divalent metal cation serves as cofactor.

It catalyses the reaction 4-CDP-2-C-methyl-D-erythritol 2-phosphate = 2-C-methyl-D-erythritol 2,4-cyclic diphosphate + CMP. Its pathway is isoprenoid biosynthesis; isopentenyl diphosphate biosynthesis via DXP pathway; isopentenyl diphosphate from 1-deoxy-D-xylulose 5-phosphate: step 4/6. Functionally, involved in the biosynthesis of isopentenyl diphosphate (IPP) and dimethylallyl diphosphate (DMAPP), two major building blocks of isoprenoid compounds. Catalyzes the conversion of 4-diphosphocytidyl-2-C-methyl-D-erythritol 2-phosphate (CDP-ME2P) to 2-C-methyl-D-erythritol 2,4-cyclodiphosphate (ME-CPP) with a corresponding release of cytidine 5-monophosphate (CMP). The sequence is that of 2-C-methyl-D-erythritol 2,4-cyclodiphosphate synthase from Pseudomonas savastanoi pv. phaseolicola (strain 1448A / Race 6) (Pseudomonas syringae pv. phaseolicola (strain 1448A / Race 6)).